Here is a 704-residue protein sequence, read N- to C-terminus: ATP-dependent zinc metalloprotease FtsH (704 aa).

Over M1–T17 the chain is Cytoplasmic. The chain crosses the membrane as a helical span at residues G18–G38. The Extracellular segment spans residues R39–S127. A helical membrane pass occupies residues T128 to M148. Residues N149–R704 are Cytoplasmic-facing. An ATP-binding site is contributed by G217–T224. H439 serves as a coordination point for Zn(2+). E440 is an active-site residue. 2 residues coordinate Zn(2+): H443 and D515. A disordered region spans residues P624 to R704. Positions P681–R704 are enriched in gly residues.

The protein in the central section; belongs to the AAA ATPase family. It in the C-terminal section; belongs to the peptidase M41 family. As to quaternary structure, homohexamer. It depends on Zn(2+) as a cofactor.

It is found in the cell membrane. In terms of biological role, acts as a processive, ATP-dependent zinc metallopeptidase for both cytoplasmic and membrane proteins. Plays a role in the quality control of integral membrane proteins. The protein is ATP-dependent zinc metalloprotease FtsH of Brachybacterium faecium (strain ATCC 43885 / DSM 4810 / JCM 11609 / LMG 19847 / NBRC 14762 / NCIMB 9860 / 6-10).